A 281-amino-acid chain; its full sequence is Bis(5'-nucleosyl)-tetraphosphatase, symmetrical (281 aa).

It belongs to the Ap4A hydrolase family.

It catalyses the reaction P(1),P(4)-bis(5'-adenosyl) tetraphosphate + H2O = 2 ADP + 2 H(+). In terms of biological role, hydrolyzes diadenosine 5',5'''-P1,P4-tetraphosphate to yield ADP. In Acidovorax ebreus (strain TPSY) (Diaphorobacter sp. (strain TPSY)), this protein is Bis(5'-nucleosyl)-tetraphosphatase, symmetrical.